Reading from the N-terminus, the 757-residue chain is Endonuclease MutS2 (757 aa).

Position 321-328 (321-328 (GPNMGGKT)) interacts with ATP. Residues 681–756 (IDIRGMTVEE…GTGVTVVEVK (76 aa)) form the Smr domain.

The protein belongs to the DNA mismatch repair MutS family. MutS2 subfamily. Homodimer. Binds to stalled ribosomes, contacting rRNA. Interacts with MutL.

Its activity is regulated as follows. Nuclease activity is stimulated by interaction with MutL and inhibited in the presence of non-hydrolytic ATP (ADPnP). ATPase activity is stimulated by DNA. Its function is as follows. Endonuclease that is involved in the suppression of homologous recombination and thus may have a key role in the control of bacterial genetic diversity. Has ATPase activity. Binds to DNA. Acts as a ribosome collision sensor, splitting the ribosome into its 2 subunits. Detects stalled/collided 70S ribosomes which it binds and splits by an ATP-hydrolysis driven conformational change. Acts upstream of the ribosome quality control system (RQC), a ribosome-associated complex that mediates the extraction of incompletely synthesized nascent chains from stalled ribosomes and their subsequent degradation. Probably generates substrates for RQC. The chain is Endonuclease MutS2 from Thermotoga maritima (strain ATCC 43589 / DSM 3109 / JCM 10099 / NBRC 100826 / MSB8).